The following is a 351-amino-acid chain: Uroporphyrinogen decarboxylase (351 aa).

Residues 25 to 29 (RQAGR), Phe-43, Asp-74, Tyr-151, Ser-206, and His-325 contribute to the substrate site.

This sequence belongs to the uroporphyrinogen decarboxylase family. As to quaternary structure, homodimer.

It localises to the cytoplasm. It carries out the reaction uroporphyrinogen III + 4 H(+) = coproporphyrinogen III + 4 CO2. Its pathway is porphyrin-containing compound metabolism; protoporphyrin-IX biosynthesis; coproporphyrinogen-III from 5-aminolevulinate: step 4/4. Catalyzes the decarboxylation of four acetate groups of uroporphyrinogen-III to yield coproporphyrinogen-III. The polypeptide is Uroporphyrinogen decarboxylase (Chlorobaculum tepidum (strain ATCC 49652 / DSM 12025 / NBRC 103806 / TLS) (Chlorobium tepidum)).